The chain runs to 265 residues: tRNA pseudouridine synthase A (265 aa).

D53 acts as the Nucleophile in catalysis. Y111 contributes to the substrate binding site.

Belongs to the tRNA pseudouridine synthase TruA family. As to quaternary structure, homodimer.

The catalysed reaction is uridine(38/39/40) in tRNA = pseudouridine(38/39/40) in tRNA. Functionally, formation of pseudouridine at positions 38, 39 and 40 in the anticodon stem and loop of transfer RNAs. The chain is tRNA pseudouridine synthase A from Acinetobacter baumannii (strain ACICU).